A 661-amino-acid polypeptide reads, in one-letter code: UvrABC system protein B (661 aa).

Residues alanine 25–proline 414 enclose the Helicase ATP-binding domain. An ATP-binding site is contributed by glycine 38–threonine 45. The Beta-hairpin signature appears at tyrosine 91 to isoleucine 114. A Helicase C-terminal domain is found at glutamine 430–isoleucine 592. One can recognise a UVR domain in the interval lysine 621 to alanine 656.

This sequence belongs to the UvrB family. As to quaternary structure, forms a heterotetramer with UvrA during the search for lesions. Interacts with UvrC in an incision complex.

It localises to the cytoplasm. Functionally, the UvrABC repair system catalyzes the recognition and processing of DNA lesions. A damage recognition complex composed of 2 UvrA and 2 UvrB subunits scans DNA for abnormalities. Upon binding of the UvrA(2)B(2) complex to a putative damaged site, the DNA wraps around one UvrB monomer. DNA wrap is dependent on ATP binding by UvrB and probably causes local melting of the DNA helix, facilitating insertion of UvrB beta-hairpin between the DNA strands. Then UvrB probes one DNA strand for the presence of a lesion. If a lesion is found the UvrA subunits dissociate and the UvrB-DNA preincision complex is formed. This complex is subsequently bound by UvrC and the second UvrB is released. If no lesion is found, the DNA wraps around the other UvrB subunit that will check the other stand for damage. This chain is UvrABC system protein B, found in Rickettsia felis (strain ATCC VR-1525 / URRWXCal2) (Rickettsia azadi).